The following is a 142-amino-acid chain: Large ribosomal subunit protein uL13 (142 aa).

Belongs to the universal ribosomal protein uL13 family. Part of the 50S ribosomal subunit.

Its function is as follows. This protein is one of the early assembly proteins of the 50S ribosomal subunit, although it is not seen to bind rRNA by itself. It is important during the early stages of 50S assembly. The chain is Large ribosomal subunit protein uL13 from Shewanella oneidensis (strain ATCC 700550 / JCM 31522 / CIP 106686 / LMG 19005 / NCIMB 14063 / MR-1).